An 855-amino-acid chain; its full sequence is Glucans biosynthesis glucosyltransferase H (855 aa).

Helical transmembrane passes span 142 to 162 (ILLT…KGIL), 196 to 216 (ILVL…TALM), 515 to 535 (VFLT…FLVL), 572 to 592 (LFST…ILIW), 606 to 626 (TLSM…RMIF), and 682 to 702 (FLWW…VSVI).

It belongs to the glycosyltransferase 2 family. OpgH subfamily.

Its subcellular location is the cell inner membrane. The protein operates within glycan metabolism; osmoregulated periplasmic glucan (OPG) biosynthesis. In terms of biological role, involved in the biosynthesis of osmoregulated periplasmic glucans (OPGs). This Pseudomonas entomophila (strain L48) protein is Glucans biosynthesis glucosyltransferase H.